Here is a 703-residue protein sequence, read N- to C-terminus: NADH-quinone oxidoreductase chain 12 (703 aa).

16 helical membrane-spanning segments follow: residues Phe-4 to Gly-24, Tyr-30 to Phe-50, Leu-79 to Leu-99, Ala-116 to Asp-136, Leu-138 to Phe-158, Gly-179 to Phe-199, Ala-224 to Leu-244, Thr-256 to Cys-276, Asn-290 to Gln-310, Leu-325 to Leu-345, Thr-346 to His-366, Ile-381 to Pro-401, Ala-415 to Ala-435, Leu-475 to Gly-495, Val-580 to Asn-600, and Leu-679 to Met-699.

Belongs to the complex I subunit 5 family. In terms of assembly, NDH-1 is composed of at least 14 different subunits, Nqo1 to Nqo14. The complex has a L-shaped structure, with the hydrophobic arm (subunits Nqo7, Nqo8, Nqo10 to Nqo14) embedded in the inner membrane and the hydrophilic peripheral arm (subunits Nqo1 to Nqo6, Nqo9) protruding into the bacterial cytoplasm. The hydrophilic domain contains all the redox centers.

It is found in the cell inner membrane. The enzyme catalyses a quinone + NADH + 5 H(+)(in) = a quinol + NAD(+) + 4 H(+)(out). In terms of biological role, NDH-1 shuttles electrons from NADH, via FMN and iron-sulfur (Fe-S) centers, to quinones in the respiratory chain. The immediate electron acceptor for the enzyme in this species is believed to be ubiquinone. Couples the redox reaction to proton translocation (for every two electrons transferred, four hydrogen ions are translocated across the cytoplasmic membrane), and thus conserves the redox energy in a proton gradient. In Paracoccus denitrificans, this protein is NADH-quinone oxidoreductase chain 12.